Consider the following 72-residue polypeptide: Protein SlyX homolog (72 aa).

This sequence belongs to the SlyX family.

This chain is Protein SlyX homolog, found in Vibrio cholerae serotype O1 (strain ATCC 39541 / Classical Ogawa 395 / O395).